We begin with the raw amino-acid sequence, 315 residues long: Methionyl-tRNA formyltransferase (315 aa).

(6S)-5,6,7,8-tetrahydrofolate is bound at residue 112 to 115 (SLLP).

Belongs to the Fmt family.

The enzyme catalyses L-methionyl-tRNA(fMet) + (6R)-10-formyltetrahydrofolate = N-formyl-L-methionyl-tRNA(fMet) + (6S)-5,6,7,8-tetrahydrofolate + H(+). In terms of biological role, attaches a formyl group to the free amino group of methionyl-tRNA(fMet). The formyl group appears to play a dual role in the initiator identity of N-formylmethionyl-tRNA by promoting its recognition by IF2 and preventing the misappropriation of this tRNA by the elongation apparatus. The chain is Methionyl-tRNA formyltransferase from Leptospira interrogans serogroup Icterohaemorrhagiae serovar copenhageni (strain Fiocruz L1-130).